The chain runs to 189 residues: Ribosomal RNA large subunit methyltransferase E (189 aa).

Residues Gly45, Phe47, Asp64, Asp82, and Asp104 each coordinate S-adenosyl-L-methionine. Lys144 acts as the Proton acceptor in catalysis.

Belongs to the class I-like SAM-binding methyltransferase superfamily. RNA methyltransferase RlmE family.

The protein localises to the cytoplasm. The enzyme catalyses uridine(2552) in 23S rRNA + S-adenosyl-L-methionine = 2'-O-methyluridine(2552) in 23S rRNA + S-adenosyl-L-homocysteine + H(+). Functionally, specifically methylates the uridine in position 2552 of 23S rRNA at the 2'-O position of the ribose in the fully assembled 50S ribosomal subunit. The sequence is that of Ribosomal RNA large subunit methyltransferase E from Borreliella afzelii (strain PKo) (Borrelia afzelii).